A 261-amino-acid chain; its full sequence is Thiazole synthase (261 aa).

K102 acts as the Schiff-base intermediate with DXP in catalysis. 1-deoxy-D-xylulose 5-phosphate is bound by residues G163, 189-190, and 211-212; these read AG and NT.

Belongs to the ThiG family. Homotetramer. Forms heterodimers with either ThiH or ThiS.

It is found in the cytoplasm. It carries out the reaction [ThiS sulfur-carrier protein]-C-terminal-Gly-aminoethanethioate + 2-iminoacetate + 1-deoxy-D-xylulose 5-phosphate = [ThiS sulfur-carrier protein]-C-terminal Gly-Gly + 2-[(2R,5Z)-2-carboxy-4-methylthiazol-5(2H)-ylidene]ethyl phosphate + 2 H2O + H(+). It participates in cofactor biosynthesis; thiamine diphosphate biosynthesis. In terms of biological role, catalyzes the rearrangement of 1-deoxy-D-xylulose 5-phosphate (DXP) to produce the thiazole phosphate moiety of thiamine. Sulfur is provided by the thiocarboxylate moiety of the carrier protein ThiS. In vitro, sulfur can be provided by H(2)S. This chain is Thiazole synthase, found in Acinetobacter baumannii (strain SDF).